A 348-amino-acid chain; its full sequence is Rhodopsin (348 aa).

Met1 is subject to N-acetylmethionine. At 1-36 (MNGTEGPNFYVPFSNKTGVVRSPFEYPQYYLAEPWQ) the chain is on the extracellular side. N-linked (GlcNAc...) asparagine glycosylation is found at Asn2 and Asn15. Residues 37–61 (FSMLAAYMFLLIVLGFPINFLTLYV) form a helical membrane-spanning segment. Residues 62 to 73 (TVQHKKLRTPLN) lie on the Cytoplasmic side of the membrane. The helical transmembrane segment at 74 to 96 (YILLNLAVADLFMVFGGFTTTLY) threads the bilayer. The Extracellular segment spans residues 97–110 (TSLHGYFVFGPTGC). Cys110 and Cys187 are disulfide-bonded. A helical membrane pass occupies residues 111–133 (NLEGFFATLGGEIALWSLVVLAI). The 'Ionic lock' involved in activated form stabilization signature appears at 134-136 (ERY). Topologically, residues 134 to 152 (ERYVVVCKPMSNFRFGENH) are cytoplasmic. Residues 153 to 173 (AIMGVAFTWVMALACAAPPLV) traverse the membrane as a helical segment. Topologically, residues 174–202 (GWSRYIPEGMQCSCGIDYYTLKPEVNNES) are extracellular. Position 201 (Glu201) interacts with Zn(2+). A helical membrane pass occupies residues 203–224 (FVIYMFVVHFTIPMIVIFFCYG). Topologically, residues 225-252 (QLVFTVKEAAAQQQESATTQKAEKEVTR) are cytoplasmic. The helical transmembrane segment at 253–274 (MVIIMVIAFLICWVPYASVAFY) threads the bilayer. At 275–286 (IFTHQGSNFGPI) the chain is on the extracellular side. Gln279 is a binding site for Zn(2+). The chain crosses the membrane as a helical span at residues 287–308 (FMTLPAFFAKSSSIYNPVIYIM). Lys296 bears the N6-(retinylidene)lysine mark. The Cytoplasmic portion of the chain corresponds to 309 to 348 (MNKQFRNCMLTTLCCGKNPLGDDEASTTGSKTETSQVAPA). Residues Cys322 and Cys323 are each lipidated (S-palmitoyl cysteine). An interaction with SAG region spans residues 330–348 (DDEASTTGSKTETSQVAPA). At Ser334 the chain carries Phosphoserine. Phosphothreonine occurs at positions 335 and 336. Ser338 is modified (phosphoserine). Phosphothreonine occurs at positions 340 and 342. At Ser343 the chain carries Phosphoserine.

The protein belongs to the G-protein coupled receptor 1 family. Opsin subfamily. Homodimer. May form a complex composed of RHO, GRK1 and RCVRN in a Ca(2+)-dependent manner; RCVRN prevents the interaction between GRK1 and RHO. Interacts with GRK1. Interacts (phosphorylated form) with SAG. Interacts with GNAT1. Interacts with GNAT3. SAG and G-proteins compete for a common binding site. Interacts with PRCD; the interaction promotes PRCD stability. Forms a complex with ASAP1 and ARF4. Forms a complex with ASAP1, RAB11A, Rabin8/RAB3IP, ARF4 and RAB11FIP3; the complex regulates Golgi-to-cilia rhodopsin/RHO transport in photoreceptors. Post-translationally, phosphorylated on some or all of the serine and threonine residues present in the C-terminal region. Contains one covalently linked retinal chromophore. Upon light absorption, the covalently bound 11-cis-retinal is converted to all-trans-retinal. After hydrolysis of the Schiff base and release of the covalently bound all-trans-retinal, active rhodopsin is regenerated by binding of a fresh molecule of 11-cis-retinal.

The protein localises to the membrane. The protein resides in the cell projection. Its subcellular location is the cilium. It is found in the photoreceptor outer segment. Photoreceptor required for image-forming vision at low light intensity. Required for photoreceptor cell viability after birth. Light-induced isomerization of 11-cis to all-trans retinal triggers a conformational change that activates signaling via G-proteins. Subsequent receptor phosphorylation mediates displacement of the bound G-protein alpha subunit by the arrestin SAG and terminates signaling. The polypeptide is Rhodopsin (RHO) (Felis catus (Cat)).